Here is a 493-residue protein sequence, read N- to C-terminus: Glutamyl-tRNA(Gln) amidotransferase subunit A (493 aa).

Catalysis depends on charge relay system residues K78 and S158. S182 functions as the Acyl-ester intermediate in the catalytic mechanism.

Belongs to the amidase family. GatA subfamily. In terms of assembly, heterotrimer of A, B and C subunits.

It catalyses the reaction L-glutamyl-tRNA(Gln) + L-glutamine + ATP + H2O = L-glutaminyl-tRNA(Gln) + L-glutamate + ADP + phosphate + H(+). Its function is as follows. Allows the formation of correctly charged Gln-tRNA(Gln) through the transamidation of misacylated Glu-tRNA(Gln) in organisms which lack glutaminyl-tRNA synthetase. The reaction takes place in the presence of glutamine and ATP through an activated gamma-phospho-Glu-tRNA(Gln). This Rickettsia felis (strain ATCC VR-1525 / URRWXCal2) (Rickettsia azadi) protein is Glutamyl-tRNA(Gln) amidotransferase subunit A.